A 283-amino-acid chain; its full sequence is ATP synthase gamma chain (283 aa).

The protein belongs to the ATPase gamma chain family. In terms of assembly, F-type ATPases have 2 components, CF(1) - the catalytic core - and CF(0) - the membrane proton channel. CF(1) has five subunits: alpha(3), beta(3), gamma(1), delta(1), epsilon(1). CF(0) has three main subunits: a, b and c.

The protein resides in the cell membrane. Its function is as follows. Produces ATP from ADP in the presence of a proton gradient across the membrane. The gamma chain is believed to be important in regulating ATPase activity and the flow of protons through the CF(0) complex. The chain is ATP synthase gamma chain from Desulforamulus reducens (strain ATCC BAA-1160 / DSM 100696 / MI-1) (Desulfotomaculum reducens).